The following is a 914-amino-acid chain: Zinc finger protein 717 (914 aa).

The KRAB domain occupies 22–93 (VSFEEVAVHF…EETPNLRLSA (72 aa)). A C2H2-type 1; degenerate zinc finger spans residues 209–231 (FQCNEQGKTFNTEAMFFIHKRVH). The segment at 266 to 277 (RKSDFTKHQQTH) adopts a C2H2-type 2; degenerate zinc-finger fold. The segment at 283 to 305 (YECVECEKPSISKSDLMLQCKMP) adopts a C2H2-type 3; degenerate zinc-finger fold. 12 consecutive C2H2-type zinc fingers follow at residues 311–333 (YACNWCEKLFSYKSSLIIHQRIH), 339–361 (YGCNECGKTFRRKSFLTLHERTH), 367–389 (YKCIECGKTFHCKSLLTLHHRTH), 395–417 (YQCSECGKTFSQKSYLTIHHRTH), 423–445 (YACDHCEEAFSHKSRLTVHQRTH), 451–473 (YECNECGKPFINKSNLRLHQRTH), 479–501 (YECNECGKTFHRKSFLTIHQWTH), 507–529 (YECNECGKTFRCKSFLTVHQRTH), 535–557 (YACNECGKTYSHKSYLTVHHRTH), 563–585 (YECNECGKSFHCKSFLTIHQRTH), 591–613 (YECNECEKTFINKLNLGIHKRTH), and 619–641 (YECNECGKTFRQKSNLSTHQGTH). The segment at 649-669 (CNECGKTFHRKSFLTIHQRTH) adopts a C2H2-type 16; degenerate zinc-finger fold. Residues 741 to 752 (QKSVLTVHHRTH) form a C2H2-type 17; degenerate zinc finger. C2H2-type zinc fingers lie at residues 758–780 (YECNECGKTFCHKSNLSTHQGTH), 786–808 (YECDECRKTFYDKTVLTIHQRTH), 814–836 (FECKECRKTFSQKSKLFVHHRTH), 842–864 (FRCNECRKTFSQKSGLSIHQRTH), and 870–892 (YECKECGKTFCQKSHLSRHQQTH).

It belongs to the krueppel C2H2-type zinc-finger protein family.

It localises to the nucleus. May be involved in transcriptional regulation. The chain is Zinc finger protein 717 from Homo sapiens (Human).